Reading from the N-terminus, the 62-residue chain is Fungus-induced protein 1 (62 aa).

The N-terminal stretch at 1-22 is a signal peptide; the sequence is MSQNLFQILLIFAILAALQVQG.

The polypeptide is Fungus-induced protein 1 (Caenorhabditis briggsae).